A 340-amino-acid polypeptide reads, in one-letter code: Ketol-acid reductoisomerase (NADP(+)) (340 aa).

In terms of domain architecture, KARI N-terminal Rossmann spans 1-182 (MRVYYDRDCD…GGGRSGIIET (182 aa)). Residues 24 to 27 (YGSQ), Arg-48, Ser-51, Ser-53, and 83 to 86 (DELQ) contribute to the NADP(+) site. Residue His-108 is part of the active site. Gly-134 provides a ligand contact to NADP(+). The 147-residue stretch at 183-329 (NFRQECETDL…EKLRGMMPWI (147 aa)) folds into the KARI C-terminal knotted domain. Residues Asp-191, Glu-195, Glu-227, and Glu-231 each coordinate Mg(2+). Ser-252 is a binding site for substrate.

Belongs to the ketol-acid reductoisomerase family. The cofactor is Mg(2+).

The catalysed reaction is (2R)-2,3-dihydroxy-3-methylbutanoate + NADP(+) = (2S)-2-acetolactate + NADPH + H(+). It catalyses the reaction (2R,3R)-2,3-dihydroxy-3-methylpentanoate + NADP(+) = (S)-2-ethyl-2-hydroxy-3-oxobutanoate + NADPH + H(+). It functions in the pathway amino-acid biosynthesis; L-isoleucine biosynthesis; L-isoleucine from 2-oxobutanoate: step 2/4. It participates in amino-acid biosynthesis; L-valine biosynthesis; L-valine from pyruvate: step 2/4. In terms of biological role, involved in the biosynthesis of branched-chain amino acids (BCAA). Catalyzes an alkyl-migration followed by a ketol-acid reduction of (S)-2-acetolactate (S2AL) to yield (R)-2,3-dihydroxy-isovalerate. In the isomerase reaction, S2AL is rearranged via a Mg-dependent methyl migration to produce 3-hydroxy-3-methyl-2-ketobutyrate (HMKB). In the reductase reaction, this 2-ketoacid undergoes a metal-dependent reduction by NADPH to yield (R)-2,3-dihydroxy-isovalerate. The sequence is that of Ketol-acid reductoisomerase (NADP(+)) from Cereibacter sphaeroides (strain ATCC 17025 / ATH 2.4.3) (Rhodobacter sphaeroides).